The sequence spans 456 residues: 5-hydroxytryptamine receptor 3E (456 aa).

Residues 1–25 (MEGSWFHRKRFSFYLLLGFLLQGRG) form the signal peptide. Residues 26–248 (VTFTINCSGF…FYVAIRRRPS (223 aa)) are Extracellular-facing. Residues Cys-162 and Cys-176 are joined by a disulfide bond. An N-linked (GlcNAc...) asparagine glycan is attached at Asn-175. The chain crosses the membrane as a helical span at residues 249–269 (LYVINLLVPSGFLVAIDALSF). The Cytoplasmic segment spans residues 270–282 (YLPVKSGNRVPFK). Residues 283 to 303 (ITLLLGYNVFLLMMSDLLPTS) form a helical membrane-spanning segment. Topologically, residues 304–307 (GTPL) are extracellular. Residues 308–328 (IGVYFALCLSLMVGSLLETIF) traverse the membrane as a helical segment. The Cytoplasmic segment spans residues 329-433 (ITHLLHVATT…WLQFSHAMDA (105 aa)). The tract at residues 401-432 (TGGSEWTRAQREHEAQKQHSVELWLQFSHAMD) is HA-stretch; determines single-channel conductance in 5-HT3 receptors. The chain crosses the membrane as a helical span at residues 434 to 454 (MLFRLYLLFMASSIITVICLW). Over 455 to 456 (NT) the chain is Extracellular.

This sequence belongs to the ligand-gated ion channel (TC 1.A.9) family. 5-hydroxytryptamine receptor (TC 1.A.9.2) subfamily. HTR3E sub-subfamily. Forms homopentameric as well as heteropentameric serotonin-activated cation-selective channel complexes with HTR3A. The homomeric complex is not functional. Heteropentameric complexes display properties which resemble that of neuronal serotonin-activated channels in vivo. Expressed in adult colon and intestine.

The protein localises to the postsynaptic cell membrane. Its subcellular location is the cell membrane. The enzyme catalyses Na(+)(in) = Na(+)(out). The catalysed reaction is K(+)(in) = K(+)(out). It catalyses the reaction Ca(2+)(in) = Ca(2+)(out). In terms of biological role, forms serotonin (5-hydroxytryptamine/5-HT3)-activated cation-selective channel complexes, which when activated cause fast, depolarizing responses in neurons. The chain is 5-hydroxytryptamine receptor 3E from Homo sapiens (Human).